A 541-amino-acid polypeptide reads, in one-letter code: Tyrosine-protein kinase Yes (541 aa).

Residues 1–10 are compositionally biased toward basic and acidic residues; sequence MGCIKSKENK. Residues 1-29 form a disordered region; the sequence is MGCIKSKENKSPAIKYTPENPTEPVNTSA. Gly2 carries the N-myristoyl glycine lipid modification. A lipid anchor (S-palmitoyl cysteine; in membrane form) is attached at Cys3. Over residues 19-29 the composition is skewed to polar residues; sequence ENPTEPVNTSA. The residue at position 32 (Tyr32) is a Phosphotyrosine. Residues 89–150 form the SH3 domain; sequence GGVTIFVALY…PSNYVAPADS (62 aa). An SH2 domain is found at 156 to 253; sequence WYFGKMGRKD…GLCHKLTTVC (98 aa). The 254-residue stretch at 275–528 folds into the Protein kinase domain; that stretch reads LRLEVKLGQG…YIQSFLEDYF (254 aa). Residues 281-289 and Lys303 each bind ATP; that span reads LGQGCFGEV. Phosphotyrosine is present on residues Tyr334 and Tyr343. The Proton acceptor role is filled by Asp394. Phosphotyrosine; by autocatalysis is present on Tyr424. A Phosphotyrosine modification is found at Tyr535.

Interacts with YAP1 and CSF1R. Interacts with FASLG. Interacts with CTNND1; this interaction allows YES1-mediated activation of FYN and FER and subsequent phosphorylation of CTNND1. Interacts with IL6ST/gp130. Interacts with SCRIB, when YES1 is in a closed conformation; the interaction facilitates YES1 autophosphorylation. Post-translationally, phosphorylated. Phosphorylation by CSK on the C-terminal tail maintains the enzyme in an inactive state. Autophosphorylation at Tyr-424 maintains enzyme activity by blocking CSK-mediated inhibition. In terms of processing, palmitoylation at Cys-3 promotes membrane localization.

Its subcellular location is the cell membrane. The protein resides in the cytoplasm. It is found in the cytoskeleton. The protein localises to the microtubule organizing center. It localises to the centrosome. Its subcellular location is the cytosol. The protein resides in the cell junction. It catalyses the reaction L-tyrosyl-[protein] + ATP = O-phospho-L-tyrosyl-[protein] + ADP + H(+). Its function is as follows. Non-receptor protein tyrosine kinase that is involved in the regulation of cell growth and survival, apoptosis, cell-cell adhesion, cytoskeleton remodeling, and differentiation. Stimulation by receptor tyrosine kinases (RTKs) including EGFR, PDGFR, CSF1R and FGFR leads to recruitment of YES1 to the phosphorylated receptor, and activation and phosphorylation of downstream substrates. Upon EGFR activation, promotes the phosphorylation of PARD3 to favor epithelial tight junction assembly. Participates in the phosphorylation of specific junctional components such as CTNND1 by stimulating the FYN and FER tyrosine kinases at cell-cell contacts. Upon T-cell stimulation by CXCL12, phosphorylates collapsin response mediator protein 2/DPYSL2 and induces T-cell migration. Participates in CD95L/FASLG signaling pathway and mediates AKT-mediated cell migration. Plays a role in cell cycle progression by phosphorylating the cyclin dependent kinase 4/CDK4 thus regulating the G1 phase. Also involved in G2/M progression and cytokinesis. Catalyzes phosphorylation of organic cation transporter OCT2 which induces its transport activity. The polypeptide is Tyrosine-protein kinase Yes (Yes1) (Rattus norvegicus (Rat)).